We begin with the raw amino-acid sequence, 80 residues long: Moroidotoxin A (80 aa).

The first 27 residues, Met-1–Ala-27, serve as a signal peptide directing secretion. Positions Asp-28–Asp-44 are excised as a propeptide. 3 disulfide bridges follow: Cys-48–Cys-65, Cys-53–Cys-67, and Cys-61–Cys-76.

It belongs to the gympietide family. In terms of tissue distribution, expressed in trichomes, that are stiff epidermal hairs located on the surface of petioles and leaves. Not expressed in other aerial parts.

The protein localises to the secreted. Functionally, neurotoxin certainly responsible for the defensive, persistent, and painful stings of the giant stinging tree. Inhibits inactivation of Nav1.7/SCN9A sodium channel in sensory neurons by directly interacting with TMEM233, a newly described Nav-interacting protein. Has virtually no effect on Nav1.7/SCN9A function in heterologous expression systems and in neurons that do not express TMEM233. Also weakly but significantly affects Nav1.8/SCN10A. Coexpression of TMEM233 with Nav also confers ExTxA sensitivity to Nav1.1-Nav1.6. On the Nav1.7/SCN9A channel, causes a significant hyperpolarizing shift in the voltage dependence of activation. Its effects on Nav currents are irreversible, with no apparent reduction in activity even after repeated wash steps over 30 minutes. In vivo, induces nocifensive behavior in mice (licking or biting and shaking or lifting of the affected paw) lasting for approximately 1 hour. This Dendrocnide moroides (Gympie stinging tree) protein is Moroidotoxin A.